The chain runs to 217 residues: uncharacterized protein (217 aa).

Positions methionine 1–glycine 24 are cleaved as a signal peptide.

This is an uncharacterized protein from Aedes vexans (Inland floodwater mosquito).